The chain runs to 251 residues: Uridylate kinase (251 aa).

26–29 contributes to the ATP binding site; the sequence is KLGG. Gly-67 contacts UMP. Gly-68 and Arg-72 together coordinate ATP. UMP is bound by residues Asp-87 and 148 to 155; that span reads MGLPYFST. 2 residues coordinate ATP: Phe-181 and Asp-184.

The protein belongs to the UMP kinase family. In terms of assembly, homohexamer.

The protein resides in the cytoplasm. The enzyme catalyses UMP + ATP = UDP + ADP. Its pathway is pyrimidine metabolism; CTP biosynthesis via de novo pathway; UDP from UMP (UMPK route): step 1/1. Its activity is regulated as follows. Inhibited by UTP. Functionally, catalyzes the reversible phosphorylation of UMP to UDP. The polypeptide is Uridylate kinase (Mycolicibacterium vanbaalenii (strain DSM 7251 / JCM 13017 / BCRC 16820 / KCTC 9966 / NRRL B-24157 / PYR-1) (Mycobacterium vanbaalenii)).